A 767-amino-acid chain; its full sequence is Protein SQS1 (767 aa).

The segment covering 1-17 (MAKRHSHYQGSRRRHAR) has biased composition (basic residues). Residues 1-60 (MAKRHSHYQGSRRRHARGSNSKKAGRGNAKGIQGRKIKKKPTPTNSWHNSSIPLGEGDLD) are disordered. Positions 42–52 (TPTNSWHNSSI) are enriched in polar residues. Residue S105 is modified to Phosphoserine. Residues 176–185 (EDSENEDDDS) are compositionally biased toward acidic residues. The tract at residues 176-200 (EDSENEDDDSQNSPSTDHSLSSNES) is disordered. 5 positions are modified to phosphoserine: S217, S255, S334, S343, and S345. A disordered region spans residues 466-493 (YSDIPISDSSDEGDSYEGDSYEDDEDMA). Residues 474-492 (SSDEGDSYEGDSYEDDEDM) are compositionally biased toward acidic residues. Residues 594–656 (GLHIQNIKDE…HTSVVVEKIK (63 aa)) enclose the R3H domain. In terms of domain architecture, G-patch spans 720–767 (NENIGRRMLEKLGWKSGEGLGIQGNKGISEPIFAKIKKNRSGLRHSES).

It belongs to the SQS1 family.

It localises to the cytoplasm. The protein resides in the nucleus. Functionally, may be involved in splicing since overexpression antagonizes the suppression of splicing defects by SPP382 mutants. This chain is Protein SQS1 (SQS1), found in Saccharomyces cerevisiae (strain YJM789) (Baker's yeast).